The sequence spans 443 residues: MSKLNMTPREIVAYLDEYIIEQKEAKKFIAIALRNRYRRLQLEKSLQEEITPKNILMIGSTGVGKTEIARRMAKIMKLPFVKVEASKYTEVGFVGRDVESMVRDLVNNSVLLVENEHKERLKDKIEEAVVEKIAKKLLPPLPSGVSEEKKQEYANSLLKMQQRIAQGELDSREIEIEVRKKSIEIDSNVPPEILRVQENLIKVFHKEQDKVKKTLSVKEAKEALKAEISDTLLDGEAIKMEGLKRAESSGVIFIDEIDKIAVSSKEGSRQDPSKEGVQRDLLPIVEGSVVNTKYGSIKTEHILFIAAGAFHLSKPSDLIPELQGRFPLRVELENLTEEIMYMILTQTKTSIIKQYQALLKVEGVEIAFEDDAIKELAKLSYNANQKSEDIGARRLHTTIEKVLEDISFEAEDYSGQSVTITKELVQSKLGDLVADENLVKYIL.

ATP contacts are provided by residues Ile20, 62–67 (GVGKTE), Asp255, Glu321, and Arg393.

It belongs to the ClpX chaperone family. HslU subfamily. In terms of assembly, a double ring-shaped homohexamer of HslV is capped on each side by a ring-shaped HslU homohexamer. The assembly of the HslU/HslV complex is dependent on binding of ATP.

It is found in the cytoplasm. Functionally, ATPase subunit of a proteasome-like degradation complex; this subunit has chaperone activity. The binding of ATP and its subsequent hydrolysis by HslU are essential for unfolding of protein substrates subsequently hydrolyzed by HslV. HslU recognizes the N-terminal part of its protein substrates and unfolds these before they are guided to HslV for hydrolysis. The chain is ATP-dependent protease ATPase subunit HslU from Helicobacter pylori (strain J99 / ATCC 700824) (Campylobacter pylori J99).